The primary structure comprises 609 residues: Grainyhead-like protein 1 homolog (609 aa).

Residues 1 to 91 (MTQDYDNKRP…EHDHADHEHS (91 aa)) form a transcription activation region. A disordered region spans residues 183–207 (SDHFTSNNQPPNSQRRTPDSTFSET). Polar residues predominate over residues 185–206 (HFTSNNQPPNSQRRTPDSTFSE). Residues 239–465 (AGNNFEYTLE…DLDTQPVLFI (227 aa)) form the Grh/CP2 DB domain. Interaction with DNA regions lie at residues 371 to 380 (TDFSSQKGVK) and 418 to 421 (RKIR).

Belongs to the grh/CP2 family. Grainyhead subfamily. Binds DNA as homodimer.

It is found in the nucleus. Functionally, transcription factor involved in epithelial development. Binds directly to the consensus DNA sequence 5'-AACCGGTT-3' and modulates expression of epidermal-specific genes, including XK81A1. Important regulator of DSG1 in the context of epidermal differentiation. Regulates the maintenance of skin barrier. No genetic interaction with GRHL3, nor functional cooperativity due to diverse target gene selectivity during epithelia development. Functions downstream of BMP-signaling cascade modulating endogenous bmp4-responsive targets. The polypeptide is Grainyhead-like protein 1 homolog (Xenopus laevis (African clawed frog)).